An 83-amino-acid polypeptide reads, in one-letter code: Small ribosomal subunit protein eS21 (83 aa).

It belongs to the eukaryotic ribosomal protein eS21 family. In terms of assembly, component of the 40S small ribosomal subunit. Interacts with sta.

The protein resides in the cytoplasm. Its subcellular location is the cytosol. The protein localises to the rough endoplasmic reticulum. The chain is Small ribosomal subunit protein eS21 (RpS21) from Ceratitis capitata (Mediterranean fruit fly).